Here is a 631-residue protein sequence, read N- to C-terminus: 30-kDa cleavage and polyadenylation specificity factor 30 (631 aa).

The interval 12 to 38 is disordered; the sequence is EGGLDSGPVQNTASVPVAPPENSSSAA. 3 consecutive C3H1-type zinc fingers follow at residues 60 to 87, 88 to 112, and 114 to 141; these read SFRQTVCRHWLRGLCMKGDACGFLHQFD, KARMPICRFFRLYGECREQDCVYKH, and NEDIKECNMYKLGFCPNGPDCRYRHAKL. The tract at residues 179–234 is disordered; it reads QDRPQGQVPMQGQPQESGNLQQQQQQQPQQSQHQVSQTLIPNPADQTNRTSHPLPQ. Low complexity predominate over residues 182 to 215; it reads PQGQVPMQGQPQESGNLQQQQQQQPQQSQHQVSQ. The segment covering 216-231 has biased composition (polar residues); the sequence is TLIPNPADQTNRTSHP. The region spanning 237-372 is the YTH domain; that stretch reads NRYFVVKSNN…SVGEQLASLL (136 aa). Over residues 392-407 the composition is skewed to basic and acidic residues; it reads EEEKAKGVNPESRAEN. Disordered stretches follow at residues 392 to 447 and 541 to 631; these read EEEK…RGIM and PHMG…KKRR. Over residues 412–432 the composition is skewed to acidic residues; that stretch reads PFEDNEEEEEEEDESEEEEES. The span at 573–583 shows a compositional bias: basic and acidic residues; that stretch reads KTPERSDERGV. Ser-610 and Ser-612 each carry phosphoserine. The segment covering 621–631 has biased composition (basic residues); sequence RSRHGEGKKRR.

It belongs to the CPSF4/YTH1 family. Component of the cleavage and polyadenylation specificity factor (CPSF) complex. Can form homodimers. Binds to calmodulin. Forms a complex with cleavage and polyadenylation specificity factor (CPSF) subunits CPSF73-I, CPSF73-II, CPSF100, CPSF160, CFIS2, FIPS3, FIPS5, PAPS2, PAPS3, CLPS3, PCFS1, PCFS4, CSTF50 and CSTF77. Expressed in seedlings, roots, leaves, siliques, stems and flowers.

Its subcellular location is the nucleus. The protein resides in the cytoplasm. With respect to regulation, endonuclease activity is repressed by the N-terminal domain of FIPS5. Nuclease activity is inhibited by zinc (&gt;100 uM), cadmium in a progressive manner (50 percent activity at 1 mM Cd(2+)), and high salt levels (e.g. KCl or NaCl &gt;600 mM). Stimulated by ATP in the presence of Zn(2+), even at inhibitory zinc concentrations. Elevated temperatures prevent RNA-binding at 55 degrees Celsius, but endonuclease activity at 70 degrees Celsius. The sulfhydryl reagent dithiothreitol (DTT) inhibits both RNA-binding and nuclease activities. In terms of biological role, component of the cleavage and polyadenylation specificity factor (CPSF) complex that play a key role in pre-mRNA 3'-end formation. May interact with poly(A) polymerase and other factors to bring about cleavage and poly(A) addition. Mediates poly(A) site selection. Binds RNA in a calcium-dependent manner. Exhibits endonuclease activity with an ability to nick and degrade linear as well as circular single-stranded RNA that leaves RNA 3' ends with hydroxyl groups, thus mediating processing of the pre-mRNA as a prelude to the polyadenylation. Involved in the post-transcriptional control, probably via poly(A) addition, of the responses of plants to stress, especially genes mediating tolerance to oxidative stress. Plays a role in the regulation of salicylic acid (SA) production via the control of messenger RNA 3' end processing, thus being a key component of programmed cell death and plant immune responses required for resistance to virulent Pseudomonas syringae pv tomato DC3000 (Pst). In Arabidopsis thaliana (Mouse-ear cress), this protein is 30-kDa cleavage and polyadenylation specificity factor 30.